The sequence spans 336 residues: Adenylate isopentenyltransferase 3, chloroplastic (336 aa).

A chloroplast-targeting transit peptide spans 1-55; that stretch reads MIMKISMAMCKQPLPPSPTLDFPPARFGPNMLTLNPYGPKDKVVVIMGATGTGKS. An ATP-binding site is contributed by 48–55; it reads GATGTGKS. C333 bears the Cysteine methyl ester mark. The S-farnesyl cysteine moiety is linked to residue C333. Positions 334 to 336 are cleaved as a propeptide — removed in mature form; it reads LVA.

This sequence belongs to the IPP transferase family. Farnesylated. In terms of tissue distribution, expressed the phloem companion cells.

The protein localises to the plastid. The protein resides in the chloroplast. It is found in the nucleus membrane. It localises to the cytoplasm. It carries out the reaction dimethylallyl diphosphate + ADP = N(6)-(dimethylallyl)adenosine 5'-diphosphate + diphosphate. The catalysed reaction is dimethylallyl diphosphate + ATP = N(6)-(dimethylallyl)adenosine 5'-triphosphate + diphosphate. Its function is as follows. Involved in cytokinin biosynthesis. Catalyzes the transfer of an isopentenyl group from dimethylallyl diphosphate (DMAPP) to ATP and ADP. This Arabidopsis thaliana (Mouse-ear cress) protein is Adenylate isopentenyltransferase 3, chloroplastic (IPT3).